Consider the following 505-residue polypeptide: Aminoaldehyde dehydrogenase 2 (505 aa).

The Na(+) site is built by Ile31 and Asp99. NAD(+) is bound by residues Thr159–Trp161 and Lys185–Glu188. Residue Leu189 participates in Na(+) binding. Gly238–Thr242 serves as a coordination point for NAD(+). Glu260 serves as the catalytic Proton acceptor. Leu261 is a binding site for NAD(+). The Nucleophile role is filled by Cys295. The NAD(+) site is built by Glu394 and Trp460.

This sequence belongs to the aldehyde dehydrogenase family. Forms homodimers.

The enzyme catalyses 4-aminobutanal + NAD(+) + H2O = 4-aminobutanoate + NADH + 2 H(+). The catalysed reaction is 3-aminopropanal + NAD(+) + H2O = beta-alanine + NADH + 2 H(+). It catalyses the reaction 4-(trimethylamino)butanal + NAD(+) + H2O = 4-(trimethylamino)butanoate + NADH + 2 H(+). It carries out the reaction 4-guanidinobutanal + NAD(+) + H2O = 4-guanidinobutanoate + NADH + 2 H(+). The protein operates within amine and polyamine biosynthesis; betaine biosynthesis via choline pathway; betaine from betaine aldehyde: step 1/1. In terms of biological role, dehydrogenase that catalyzes the oxidation of several aminoaldehydes. Metabolizes and detoxifies aldehyde products of polyamine degradation to non-toxic amino acids. Catalyzes the oxidation of 4-aminobutanal and 3-aminopropanal to 4-aminobutanoate and beta-alanine, respectively. Catalyzes the oxidation of 4-(trimethylamino)butanal and 4-guanidinobutanal to 4-trimethylammoniobutanoate and 4-guanidinobutanoate, respectively. This chain is Aminoaldehyde dehydrogenase 2, found in Solanum lycopersicum (Tomato).